Consider the following 312-residue polypeptide: Olfactory receptor 1D2 (312 aa).

Residues 1–25 (MDGGNQSEGSEFLLLGMSESPEQQQ) are Extracellular-facing. N5 is a glycosylation site (N-linked (GlcNAc...) asparagine). A helical transmembrane segment spans residues 26-49 (ILFWMFLSMYLVTVVGNVLIILAI). Residues 50–57 (NSDSHLHT) lie on the Cytoplasmic side of the membrane. A helical transmembrane segment spans residues 58–79 (PMYFFLANLSFTDLFFVTNTIP). Residues 80 to 100 (KMLVNLQSQNKAISYAGCLTQ) are Extracellular-facing. C97 and C189 form a disulfide bridge. A helical transmembrane segment spans residues 101-120 (LYFLVSLVALDNLILAVMAY). Residues 121–139 (DRYVAICCPLHYTTAMSPK) are Cytoplasmic-facing. The chain crosses the membrane as a helical span at residues 140–158 (LCILLLSLCWVLSVLYGLI). The Extracellular segment spans residues 159–196 (HTILMTRVTFCGSRKIHYIFCEMYVLLRMACSNIQINH). N195 carries N-linked (GlcNAc...) asparagine glycosylation. Residues 197 to 219 (TVLIATGCFIFLIPFGFVIISYV) traverse the membrane as a helical segment. Residues 220–236 (LIIRAILRIPSVSKKYK) lie on the Cytoplasmic side of the membrane. A helical transmembrane segment spans residues 237–259 (AFSTCASHLGAVSLFYGTLCMVY). The Extracellular portion of the chain corresponds to 260 to 271 (LKPLHTFSVKDS). The chain crosses the membrane as a helical span at residues 272 to 291 (VATVMYAVVTPMMNPFIYSL). Over 292-312 (RNKDMHGALGRLLDTHFKRLT) the chain is Cytoplasmic.

The protein belongs to the G-protein coupled receptor 1 family.

It is found in the cell membrane. Functionally, odorant receptor. The sequence is that of Olfactory receptor 1D2 (OR1D2) from Gorilla gorilla gorilla (Western lowland gorilla).